The chain runs to 971 residues: Isoleucine--tRNA ligase (971 aa).

The short motif at 64–74 is the 'HIGH' region element; sequence PYANGHIHIGH. Glutamate 602 is a binding site for L-isoleucyl-5'-AMP. Positions 643–647 match the 'KMSKS' region motif; the sequence is KMSKS. Lysine 646 contributes to the ATP binding site.

This sequence belongs to the class-I aminoacyl-tRNA synthetase family. IleS type 1 subfamily. As to quaternary structure, monomer.

It localises to the cytoplasm. The catalysed reaction is tRNA(Ile) + L-isoleucine + ATP = L-isoleucyl-tRNA(Ile) + AMP + diphosphate. In terms of biological role, catalyzes the attachment of isoleucine to tRNA(Ile). As IleRS can inadvertently accommodate and process structurally similar amino acids such as valine, to avoid such errors it has two additional distinct tRNA(Ile)-dependent editing activities. One activity is designated as 'pretransfer' editing and involves the hydrolysis of activated Val-AMP. The other activity is designated 'posttransfer' editing and involves deacylation of mischarged Val-tRNA(Ile). The protein is Isoleucine--tRNA ligase of Bartonella henselae (strain ATCC 49882 / DSM 28221 / CCUG 30454 / Houston 1) (Rochalimaea henselae).